We begin with the raw amino-acid sequence, 460 residues long: Dynactin subunit 4 (460 aa).

At Ala-2 the chain carries N-acetylalanine. Positions 152–172 form a coiled coil; the sequence is QQLAQKEKVERDRKKLARRRN. Ser-196 carries the phosphoserine modification. Residue Lys-215 forms a Glycyl lysine isopeptide (Lys-Gly) (interchain with G-Cter in SUMO2) linkage. Thr-407 carries the phosphothreonine modification.

Belongs to the dynactin subunit 4 family. Subunit of dynactin, a multiprotein complex part of a tripartite complex with dynein and a adapter, such as BICDL1, BICD2 or HOOK3. The dynactin complex is built around ACTR1A/ACTB filament and consists of an actin-related filament composed of a shoulder domain, a pointed end and a barbed end. Its length is defined by its flexible shoulder domain. The soulder is composed of 2 DCTN1 subunits, 4 DCTN2 and 2 DCTN3. The 4 DCNT2 (via N-terminus) bind the ACTR1A filament and act as molecular rulers to determine the length. The pointed end is important for binding dynein-dynactin cargo adapters. Consists of 4 subunits: ACTR10, DCNT4, DCTN5 and DCTN6. The barbed end is composed of a CAPZA1:CAPZB heterodimers, which binds ACTR1A/ACTB filament and dynactin and stabilizes dynactin. Interacts with ATP7B, but not ATP7A, in a copper-dependent manner. Interacts with ANK2; this interaction is required for localization at costameres. Interacts with N4BP2L1.

The protein localises to the cytoplasm. It is found in the cytoskeleton. The protein resides in the microtubule organizing center. It localises to the centrosome. Its subcellular location is the stress fiber. The protein localises to the cell cortex. It is found in the myofibril. The protein resides in the sarcomere. Functionally, part of the dynactin complex that activates the molecular motor dynein for ultra-processive transport along microtubules. The sequence is that of Dynactin subunit 4 (DCTN4) from Pongo abelii (Sumatran orangutan).